Here is a 269-residue protein sequence, read N- to C-terminus: Undecaprenyl-diphosphatase (269 aa).

7 helical membrane passes run 41–61 (FATMFEIVIQLGAILAVVFHY), 78–98 (GFNLWFKIFIAFIPAAVIGLL), 107–127 (LFSPFTVAIALIAGAIMMIVI), 148–167 (SLLIGIAQVMSLFPGMSRSA), 184–204 (AEFSFFLAIPTMFAATTLSLL), 213–233 (LEWQALAVGFITSFLTALFVV), and 248–268 (FAYYRLAVGVLMILLVAEKIV).

Belongs to the UppP family.

Its subcellular location is the cell membrane. The enzyme catalyses di-trans,octa-cis-undecaprenyl diphosphate + H2O = di-trans,octa-cis-undecaprenyl phosphate + phosphate + H(+). Functionally, catalyzes the dephosphorylation of undecaprenyl diphosphate (UPP). Confers resistance to bacitracin. The chain is Undecaprenyl-diphosphatase from Thermoanaerobacter pseudethanolicus (strain ATCC 33223 / 39E) (Clostridium thermohydrosulfuricum).